The sequence spans 647 residues: 1-deoxy-D-xylulose-5-phosphate synthase (647 aa).

Thiamine diphosphate is bound by residues His-88 and 129–131 (GHA). Asp-160 is a binding site for Mg(2+). Residues 161–162 (GA), Asn-189, Tyr-300, and Glu-377 contribute to the thiamine diphosphate site. A Mg(2+)-binding site is contributed by Asn-189.

It belongs to the transketolase family. DXPS subfamily. As to quaternary structure, homodimer. The cofactor is Mg(2+). Requires thiamine diphosphate as cofactor.

It carries out the reaction D-glyceraldehyde 3-phosphate + pyruvate + H(+) = 1-deoxy-D-xylulose 5-phosphate + CO2. The protein operates within metabolic intermediate biosynthesis; 1-deoxy-D-xylulose 5-phosphate biosynthesis; 1-deoxy-D-xylulose 5-phosphate from D-glyceraldehyde 3-phosphate and pyruvate: step 1/1. In terms of biological role, catalyzes the acyloin condensation reaction between C atoms 2 and 3 of pyruvate and glyceraldehyde 3-phosphate to yield 1-deoxy-D-xylulose-5-phosphate (DXP). The polypeptide is 1-deoxy-D-xylulose-5-phosphate synthase (Dehalococcoides mccartyi (strain CBDB1)).